The primary structure comprises 450 residues: MTQTLHIVGGGMAGSEAAWQAAEMGVDVVLHEMRPKVGTFAHQTGLLGEMVCSNSFRSDDDEQNAVGLLHWEMRAAGGLIMRMADKHRLPAGGALAVDRDLFAQSVTDTLTAHPRITIEYGEISELPASGQWIFATGPLTSSKLSDAIAAQTGGAALAFFDAIAPIVYFDSIDMSRAWMQSRYDKGETEEERTAYLNCPMDKDQYEAFIDALLAADKTEFKEGETADYFDGCLPIEVMAERGRETLRFGPMKPVGLTNPHQPDVKPYAVVQLRRDNKLGTLYNIVGFQTKMKYGAQAAVFKTIPGLENASFARLGGIHRNTFLNAPTLLDEQMRLRSRPNIRFAGQITGVEGYVESAAMGLLAGRLAAAEILGISLSAPADTTATGALITHISGGAEAKTFQPMNVNFGLFPPVEGLKGGRRGRKDRYKAYTDRAKRDWQNWLEAVKEPA.

9–14 (GGGMAG) serves as a coordination point for FAD.

Belongs to the MnmG family. TrmFO subfamily. The cofactor is FAD.

The protein resides in the cytoplasm. It carries out the reaction uridine(54) in tRNA + (6R)-5,10-methylene-5,6,7,8-tetrahydrofolate + NADH + H(+) = 5-methyluridine(54) in tRNA + (6S)-5,6,7,8-tetrahydrofolate + NAD(+). It catalyses the reaction uridine(54) in tRNA + (6R)-5,10-methylene-5,6,7,8-tetrahydrofolate + NADPH + H(+) = 5-methyluridine(54) in tRNA + (6S)-5,6,7,8-tetrahydrofolate + NADP(+). In terms of biological role, catalyzes the folate-dependent formation of 5-methyl-uridine at position 54 (M-5-U54) in all tRNAs. This chain is Methylenetetrahydrofolate--tRNA-(uracil-5-)-methyltransferase TrmFO, found in Roseobacter denitrificans (strain ATCC 33942 / OCh 114) (Erythrobacter sp. (strain OCh 114)).